We begin with the raw amino-acid sequence, 620 residues long: Endoglucanase 10 (620 aa).

Positions 1–26 are disordered; that stretch reads MFGRDPWGGPLEISNADSATDDDRSR. The chain crosses the membrane as a helical; Signal-anchor for type II membrane protein span at residues 72–92; that stretch reads IFMWTVGTILGVGLFIGFVMM. The Nucleophile role is filled by Asp165. Residues Asn216, Asn314, Asn323, Asn344, Asn408, and Asn425 are each glycosylated (N-linked (GlcNAc...) asparagine). Active-site residues include His513 and Asp561. Asn567 carries N-linked (GlcNAc...) asparagine glycosylation. Glu570 is a catalytic residue.

This sequence belongs to the glycosyl hydrolase 9 (cellulase E) family. In terms of tissue distribution, ubiquitous.

The protein localises to the membrane. The catalysed reaction is Endohydrolysis of (1-&gt;4)-beta-D-glucosidic linkages in cellulose, lichenin and cereal beta-D-glucans.. This Oryza sativa subsp. japonica (Rice) protein is Endoglucanase 10 (GLU2).